Consider the following 371-residue polypeptide: E3 ubiquitin-protein ligase RHF1A (371 aa).

An RING-type; atypical zinc finger spans residues C46–W87. Disordered stretches follow at residues H199–P254 and E348–C371. Residues Q200–D225 show a composition bias toward polar residues. A compositionally biased stretch (low complexity) spans S226–S252.

As to quaternary structure, interacts with KRP6. Expressed in stems, flowers, green siliques, cauline leaves, seeds and roots.

It carries out the reaction S-ubiquitinyl-[E2 ubiquitin-conjugating enzyme]-L-cysteine + [acceptor protein]-L-lysine = [E2 ubiquitin-conjugating enzyme]-L-cysteine + N(6)-ubiquitinyl-[acceptor protein]-L-lysine.. It participates in protein modification; protein ubiquitination. E3 ubiquitin-protein ligase involved in the positive regulation of the gametogenesis progression. Mediates the proteasomal degradation of KRP6, a cyclin-dependent kinase inhibitor which accumulates during meiosis and blocks the progression of subsequent mitoses during gametophyte development. Functions in association with RHF2A. Possesses E3 ubiquitin-protein ligase activity when associated with the E2 enzyme UBC8 in vitro. This chain is E3 ubiquitin-protein ligase RHF1A, found in Arabidopsis thaliana (Mouse-ear cress).